The chain runs to 354 residues: Probable cinnamyl alcohol dehydrogenase 5 (354 aa).

Residue Cys-43 coordinates Zn(2+). Ser-45 is an NADP(+) binding site. Residues His-65, Glu-66, Cys-96, Cys-99, Cys-102, Cys-110, and Cys-159 each contribute to the Zn(2+) site. NADP(+) contacts are provided by residues Thr-163, 184–189 (GLGGLG), 207–212 (SSSPGK), Thr-247, Gly-271, and 294–296 (SCI).

The protein belongs to the zinc-containing alcohol dehydrogenase family. In terms of assembly, homodimer. The cofactor is Zn(2+).

The catalysed reaction is (E)-cinnamyl alcohol + NADP(+) = (E)-cinnamaldehyde + NADPH + H(+). It carries out the reaction (E)-coniferol + NADP(+) = (E)-coniferaldehyde + NADPH + H(+). It catalyses the reaction (E)-sinapyl alcohol + NADP(+) = (E)-sinapaldehyde + NADPH + H(+). The enzyme catalyses (E)-4-coumaroyl alcohol + NADP(+) = (E)-4-coumaraldehyde + NADPH + H(+). The catalysed reaction is (E)-caffeyl alcohol + NADP(+) = (E)-caffeyl aldehyde + NADPH + H(+). Its pathway is aromatic compound metabolism; phenylpropanoid biosynthesis. Functionally, involved in lignin biosynthesis. Catalyzes the final step specific for the production of lignin monomers. Catalyzes the NADPH-dependent reduction of coniferaldehyde, 5-hydroxyconiferaldehyde, sinapaldehyde, 4-coumaraldehyde and caffeyl aldehyde to their respective alcohols. The sequence is that of Probable cinnamyl alcohol dehydrogenase 5 from Oryza sativa subsp. japonica (Rice).